Here is a 347-residue protein sequence, read N- to C-terminus: GMP reductase (347 aa).

108-131 (ADFDKMKQILALSPALKFICIDVA) provides a ligand contact to NADP(+). Residues Gly181 and Gly183 each contribute to the K(+) site. Catalysis depends on Cys186, which acts as the Thioimidate intermediate. 216-239 (IVSDGGCSVPGDVAKAFGGGADFV) serves as a coordination point for NADP(+).

It belongs to the IMPDH/GMPR family. GuaC type 1 subfamily. As to quaternary structure, homotetramer.

It carries out the reaction IMP + NH4(+) + NADP(+) = GMP + NADPH + 2 H(+). Its function is as follows. Catalyzes the irreversible NADPH-dependent deamination of GMP to IMP. It functions in the conversion of nucleobase, nucleoside and nucleotide derivatives of G to A nucleotides, and in maintaining the intracellular balance of A and G nucleotides. This Yersinia enterocolitica serotype O:8 / biotype 1B (strain NCTC 13174 / 8081) protein is GMP reductase.